Consider the following 481-residue polypeptide: Proline--tRNA ligase (481 aa).

It belongs to the class-II aminoacyl-tRNA synthetase family. ProS type 3 subfamily. As to quaternary structure, homodimer.

The protein resides in the cytoplasm. It catalyses the reaction tRNA(Pro) + L-proline + ATP = L-prolyl-tRNA(Pro) + AMP + diphosphate. Functionally, catalyzes the attachment of proline to tRNA(Pro) in a two-step reaction: proline is first activated by ATP to form Pro-AMP and then transferred to the acceptor end of tRNA(Pro). The polypeptide is Proline--tRNA ligase (Chlorobium luteolum (strain DSM 273 / BCRC 81028 / 2530) (Pelodictyon luteolum)).